The chain runs to 147 residues: Large ribosomal subunit protein uL16 (147 aa).

The protein belongs to the universal ribosomal protein uL16 family. In terms of assembly, part of the 50S ribosomal subunit.

Functionally, binds 23S rRNA and is also seen to make contacts with the A and possibly P site tRNAs. In Clostridium novyi (strain NT), this protein is Large ribosomal subunit protein uL16.